A 348-amino-acid chain; its full sequence is RNA 3'-terminal phosphate cyclase (348 aa).

Residues glutamine 102 and 285-288 (HMGD) each bind ATP. Residue histidine 311 is the Tele-AMP-histidine intermediate of the active site.

The protein belongs to the RNA 3'-terminal cyclase family. Type 1 subfamily.

Its subcellular location is the cytoplasm. The catalysed reaction is a 3'-end 3'-phospho-ribonucleotide-RNA + ATP = a 3'-end 2',3'-cyclophospho-ribonucleotide-RNA + AMP + diphosphate. In terms of biological role, catalyzes the conversion of 3'-phosphate to a 2',3'-cyclic phosphodiester at the end of RNA. The mechanism of action of the enzyme occurs in 3 steps: (A) adenylation of the enzyme by ATP; (B) transfer of adenylate to an RNA-N3'P to produce RNA-N3'PP5'A; (C) and attack of the adjacent 2'-hydroxyl on the 3'-phosphorus in the diester linkage to produce the cyclic end product. The biological role of this enzyme is unknown but it is likely to function in some aspects of cellular RNA processing. This Korarchaeum cryptofilum (strain OPF8) protein is RNA 3'-terminal phosphate cyclase.